Here is a 338-residue protein sequence, read N- to C-terminus: Ketol-acid reductoisomerase (NADP(+)) (338 aa).

Residues 1-181 (MQVYYDKDCD…GGGRTGIIET (181 aa)) enclose the KARI N-terminal Rossmann domain. Residues 24–27 (YGSQ), Arg47, Ser50, Ser52, and 82–85 (DEFQ) each bind NADP(+). Residue His107 is part of the active site. Gly133 serves as a coordination point for NADP(+). In terms of domain architecture, KARI C-terminal knotted spans 182–327 (TFKDETETDL…EKLRAMMPWI (146 aa)). 4 residues coordinate Mg(2+): Asp190, Glu194, Glu226, and Glu230. Ser251 contacts substrate.

It belongs to the ketol-acid reductoisomerase family. It depends on Mg(2+) as a cofactor.

It catalyses the reaction (2R)-2,3-dihydroxy-3-methylbutanoate + NADP(+) = (2S)-2-acetolactate + NADPH + H(+). The enzyme catalyses (2R,3R)-2,3-dihydroxy-3-methylpentanoate + NADP(+) = (S)-2-ethyl-2-hydroxy-3-oxobutanoate + NADPH + H(+). It functions in the pathway amino-acid biosynthesis; L-isoleucine biosynthesis; L-isoleucine from 2-oxobutanoate: step 2/4. It participates in amino-acid biosynthesis; L-valine biosynthesis; L-valine from pyruvate: step 2/4. Functionally, involved in the biosynthesis of branched-chain amino acids (BCAA). Catalyzes an alkyl-migration followed by a ketol-acid reduction of (S)-2-acetolactate (S2AL) to yield (R)-2,3-dihydroxy-isovalerate. In the isomerase reaction, S2AL is rearranged via a Mg-dependent methyl migration to produce 3-hydroxy-3-methyl-2-ketobutyrate (HMKB). In the reductase reaction, this 2-ketoacid undergoes a metal-dependent reduction by NADPH to yield (R)-2,3-dihydroxy-isovalerate. This chain is Ketol-acid reductoisomerase (NADP(+)), found in Teredinibacter turnerae (strain ATCC 39867 / T7901).